Reading from the N-terminus, the 1481-residue chain is Coiled-coil domain-containing protein 88B (1481 aa).

Coiled-coil stretches lie at residues 200–225 and 258–491; these read ELVAEELEMQLRSLTGMMSRLARERD and SHHL…GSQH. Disordered regions lie at residues 430-458, 494-731, and 1331-1481; these read ELQRSLEPPPGSPGEASLPGAAPSLQDEV, LEEQ…AIPE, and PRRE…SLSQ. Position 441 is a phosphoserine (S441). Polar residues-rich tracts occupy residues 542–557 and 568–590; these read ASYSDITRSPKCSQAP and QMVSQDPQTSDQALQESDPTVET. Residue S649 is modified to Phosphoserine. The span at 660-695 shows a compositional bias: basic and acidic residues; the sequence is TLREPLKDQKALDRELELSKQQKETGRHEQRPKGLE. Positions 731-1308 form a coiled coil; the sequence is EEQALRDEVA…KIMDQYRVLE (578 aa). Phosphoserine is present on residues S1353 and S1384. The span at 1371–1386 shows a compositional bias: polar residues; that stretch reads TGSSSPAPMRRVQSSL. The span at 1453–1472 shows a compositional bias: basic and acidic residues; it reads LSEHEADDTREAFQEQKPEK.

The protein belongs to the CCDC88 family. As to quaternary structure, homodimer. Interacts with DOCK8. Interacts (via C-terminus) with intact microtubules. Interacts with dynein-dynactin motor complex. Interacts (via C-terminus) with HSPA5. Abundantly expressed in immune cells, including both CD4(+) and CD8(+) T-cells and in myeloid cells (at protein level). Expressed in endothelium (at protein level). Expressed specifically in spleen, bone marrow, lymph nodes and thymus. Expressed in liver and heart.

Its subcellular location is the membrane. It is found in the cytoplasm. It localises to the cytoskeleton. The protein resides in the microtubule organizing center. The protein localises to the endoplasmic reticulum. Its subcellular location is the golgi apparatus. In terms of biological role, acts as a positive regulator of T-cell maturation and inflammatory function. Required for several functions of T-cells in both the CD4(+) and the CD8(+) compartments and this includes expression of cell surface markers of activation, proliferation, and cytokine production in response to specific or non-specific stimulation and during the course of infection with the mouse malaria parasite Plasmodium berghei. Enhances NK cell cytotoxicity by positively regulating polarization of microtubule-organizing center (MTOC) to cytotoxic synapse, lytic granule transport along microtubules, and dynein-mediated clustering to MTOC. Interacts with HSPA5 and stabilizes the interaction between HSPA5 and ERN1, leading to suppression of ERN1-induced JNK activation and endoplasmic reticulum stress-induced apoptosis. This Mus musculus (Mouse) protein is Coiled-coil domain-containing protein 88B (Ccdc88b).